We begin with the raw amino-acid sequence, 77 residues long: Acyl carrier protein (77 aa).

One can recognise a Carrier domain in the interval 2 to 77; it reads SSIDKRIKEI…DAIDYITDHT (76 aa). S37 is subject to O-(pantetheine 4'-phosphoryl)serine.

It belongs to the acyl carrier protein (ACP) family. 4'-phosphopantetheine is transferred from CoA to a specific serine of apo-ACP by AcpS. This modification is essential for activity because fatty acids are bound in thioester linkage to the sulfhydryl of the prosthetic group.

The protein resides in the cytoplasm. The protein operates within lipid metabolism; fatty acid biosynthesis. Its function is as follows. Carrier of the growing fatty acid chain in fatty acid biosynthesis. The sequence is that of Acyl carrier protein from Geotalea daltonii (strain DSM 22248 / JCM 15807 / FRC-32) (Geobacter daltonii).